Here is a 278-residue protein sequence, read N- to C-terminus: Undecaprenyl-diphosphatase 1 (278 aa).

The next 7 membrane-spanning stretches (helical) occupy residues 1–21, 43–63, 83–103, 112–132, 192–212, 224–244, and 257–277; these read MFFG…TEFL, AFTT…VVLL, IWAT…IGFL, LMNW…FIFI, FSFF…IGSY, IVIL…VIKW, and FGWY…IGII.

It belongs to the UppP family.

Its subcellular location is the cell membrane. It carries out the reaction di-trans,octa-cis-undecaprenyl diphosphate + H2O = di-trans,octa-cis-undecaprenyl phosphate + phosphate + H(+). Its function is as follows. Catalyzes the dephosphorylation of undecaprenyl diphosphate (UPP). Confers resistance to bacitracin. The protein is Undecaprenyl-diphosphatase 1 of Oenococcus oeni (strain ATCC BAA-331 / PSU-1).